The primary structure comprises 180 residues: Sec-independent protein translocase protein TatB (180 aa).

A helical membrane pass occupies residues methionine 1 to glycine 21. The tract at residues threonine 77–serine 180 is disordered. A compositionally biased stretch (low complexity) spans alanine 105–glutamate 129.

Belongs to the TatB family. As to quaternary structure, the Tat system comprises two distinct complexes: a TatABC complex, containing multiple copies of TatA, TatB and TatC subunits, and a separate TatA complex, containing only TatA subunits. Substrates initially bind to the TatABC complex, which probably triggers association of the separate TatA complex to form the active translocon.

It is found in the cell inner membrane. Part of the twin-arginine translocation (Tat) system that transports large folded proteins containing a characteristic twin-arginine motif in their signal peptide across membranes. Together with TatC, TatB is part of a receptor directly interacting with Tat signal peptides. TatB may form an oligomeric binding site that transiently accommodates folded Tat precursor proteins before their translocation. In Nitrobacter winogradskyi (strain ATCC 25391 / DSM 10237 / CIP 104748 / NCIMB 11846 / Nb-255), this protein is Sec-independent protein translocase protein TatB.